A 255-amino-acid polypeptide reads, in one-letter code: Acetylglutamate kinase (255 aa).

Substrate is bound by residues 40–41, Arg62, and Asn153; that span reads GG.

Belongs to the acetylglutamate kinase family. ArgB subfamily.

Its subcellular location is the cytoplasm. It carries out the reaction N-acetyl-L-glutamate + ATP = N-acetyl-L-glutamyl 5-phosphate + ADP. Its pathway is amino-acid biosynthesis; L-arginine biosynthesis; N(2)-acetyl-L-ornithine from L-glutamate: step 2/4. Catalyzes the ATP-dependent phosphorylation of N-acetyl-L-glutamate. The protein is Acetylglutamate kinase of Bacillus cereus (strain AH820).